The sequence spans 237 residues: Uridylate kinase (237 aa).

9 to 12 (KLSG) lines the ATP pocket. Residue G51 participates in UMP binding. ATP contacts are provided by G52 and R56. UMP contacts are provided by residues D71 and 132–139 (CGNPFFTT). Residues T159, Y165, and D168 each coordinate ATP.

The protein belongs to the UMP kinase family. In terms of assembly, homohexamer.

The protein resides in the cytoplasm. The catalysed reaction is UMP + ATP = UDP + ADP. Its pathway is pyrimidine metabolism; CTP biosynthesis via de novo pathway; UDP from UMP (UMPK route): step 1/1. Inhibited by UTP. Functionally, catalyzes the reversible phosphorylation of UMP to UDP. The polypeptide is Uridylate kinase (Prochlorococcus marinus (strain SARG / CCMP1375 / SS120)).